Reading from the N-terminus, the 500-residue chain is Formate-nitrite transporter 3 (500 aa).

Residues 1–31 are Cytoplasmic-facing; it reads MVLAASPEAYRKVIEYGIKKTKLRIDRLFLQ. The helical transmembrane segment at 32 to 52 threads the bilayer; sequence AIMAGIYVGMAGHACTALAGA. The Extracellular portion of the chain corresponds to 53–69; the sequence is YSTDPANPLAVSKATQK. Residues 70–90 traverse the membrane as a helical segment; sequence FLYASLFPVAFIAIIFTGAEL. The Cytoplasmic segment spans residues 91-113; sequence FTGNTMTMLVCLLERRVTALQLC. Residues 114–134 form a helical membrane-spanning segment; the sequence is INWICSLVGNWAGALFAAYFL. Topologically, residues 135–164 are extracellular; it reads SYLPGVLQDPDHLHYLEDVAAHKTELSFLQ. Residues 165–185 form a helical membrane-spanning segment; that stretch reads CFCLAVGCNTFVCLAVWFVIA. The Cytoplasmic portion of the chain corresponds to 186–192; sequence SDDAAGK. The helical transmembrane segment at 193–213 threads the bilayer; the sequence is IMSMWFPIVSFCVAGYEHIIA. Topologically, residues 214–237 are extracellular; it reads NFYTLQCALMHGVGPGVGTVILKN. The chain crosses the membrane as a helical span at residues 238 to 258; it reads FIPTLLGNIVGGCGLVGAVYW. Over 259 to 500 the chain is Cytoplasmic; sequence YNFYPTVCVV…ALEEHPASTI (242 aa). The interval 411–500 is disordered; sequence PLRENSGVPS…ALEEHPASTI (90 aa). 2 stretches are compositionally biased toward basic and acidic residues: residues 428–444 and 466–485; these read GRVR…RGGE and FHPH…ETRV.

Belongs to the FNT transporter (TC 1.A.16) family. In terms of assembly, homopentamer.

Its subcellular location is the cell membrane. It catalyses the reaction (S)-lactate(in) + H(+)(in) = (S)-lactate(out) + H(+)(out). The catalysed reaction is formate(in) + H(+)(in) = formate(out) + H(+)(out). The enzyme catalyses pyruvate(out) + H(+)(out) = pyruvate(in) + H(+)(in). It carries out the reaction acetate(out) + H(+)(out) = acetate(in) + H(+)(in). Its activity is regulated as follows. Inhibited by p-chloromercuribenzene sulfonate (pCMBS). Methyl methanethiosulfonate (MMTS) inhibits L-lactate but not formate transport. Inhibited by the Malaria Box compound MMV007839. Inhibited by BH-296, BH-317, BH-326 and BH-388 compounds. Monocarboxylate-proton symporter; active in acidic-to-neutral pH range. Transports L-lactate and formate. This Toxoplasma gondii (strain ATCC 50611 / Me49) protein is Formate-nitrite transporter 3.